The primary structure comprises 211 residues: Phosphoribosyl-dephospho-CoA transferase (211 aa).

Catalysis depends on residues aspartate 136 and aspartate 138.

Belongs to the MdcG family.

It catalyses the reaction apo-[malonate decarboxylase ACP] + 2'-(5''-triphospho-alpha-D-ribosyl)-3'-dephospho-CoA = holo-[malonate decarboxylase ACP] + diphosphate. Transfers 2'-(5-triphosphoribosyl)-3'-dephosphocoenzyme-A to the apo-[acyl-carrier-protein] of the malonate decarboxylase to yield holo-[acyl-carrier-protein]. This is Phosphoribosyl-dephospho-CoA transferase from Pseudomonas syringae pv. tomato (strain ATCC BAA-871 / DC3000).